The following is a 155-amino-acid chain: Aspartate carbamoyltransferase regulatory chain (155 aa).

4 residues coordinate Zn(2+): Cys-110, Cys-115, Cys-139, and Cys-142.

It belongs to the PyrI family. In terms of assembly, contains catalytic and regulatory chains. Zn(2+) is required as a cofactor.

Functionally, involved in allosteric regulation of aspartate carbamoyltransferase. This Yersinia pseudotuberculosis serotype IB (strain PB1/+) protein is Aspartate carbamoyltransferase regulatory chain.